A 452-amino-acid chain; its full sequence is Phosphoglucosamine mutase (452 aa).

The active-site Phosphoserine intermediate is the serine 88. Residues serine 88, aspartate 234, aspartate 236, and aspartate 238 each coordinate Mg(2+). Serine 88 bears the Phosphoserine mark.

This sequence belongs to the phosphohexose mutase family. The cofactor is Mg(2+). In terms of processing, activated by phosphorylation.

It carries out the reaction alpha-D-glucosamine 1-phosphate = D-glucosamine 6-phosphate. In terms of biological role, catalyzes the conversion of glucosamine-6-phosphate to glucosamine-1-phosphate. This is Phosphoglucosamine mutase from Methanococcus aeolicus (strain ATCC BAA-1280 / DSM 17508 / OCM 812 / Nankai-3).